A 375-amino-acid chain; its full sequence is tRNA-specific 2-thiouridylase MnmA (375 aa).

ATP is bound by residues 12–19 and methionine 38; that span reads GMSGGVDS. Residues 98-100 are interaction with target base in tRNA; it reads NPD. Cysteine 103 serves as the catalytic Nucleophile. Cysteine 103 and cysteine 200 form a disulfide bridge. Glycine 127 contacts ATP. The segment at 150–152 is interaction with tRNA; that stretch reads KDQ. Cysteine 200 functions as the Cysteine persulfide intermediate in the catalytic mechanism. The interval 312-313 is interaction with tRNA; sequence RY.

This sequence belongs to the MnmA/TRMU family.

It localises to the cytoplasm. The enzyme catalyses S-sulfanyl-L-cysteinyl-[protein] + uridine(34) in tRNA + AH2 + ATP = 2-thiouridine(34) in tRNA + L-cysteinyl-[protein] + A + AMP + diphosphate + H(+). In terms of biological role, catalyzes the 2-thiolation of uridine at the wobble position (U34) of tRNA, leading to the formation of s(2)U34. The polypeptide is tRNA-specific 2-thiouridylase MnmA (Lactobacillus delbrueckii subsp. bulgaricus (strain ATCC BAA-365 / Lb-18)).